The sequence spans 356 residues: 5-amino-6-(D-ribitylamino)uracil--L-tyrosine 4-hydroxyphenyl transferase (356 aa).

The region spanning 47–281 (VTYIVNRNIN…AIARILLNTH (235 aa)) is the Radical SAM core domain. [4Fe-4S] cluster is bound by residues Cys61, Cys65, and Cys68.

It belongs to the radical SAM superfamily. CofH family. As to quaternary structure, consists of two subunits, CofG and CofH. Requires [4Fe-4S] cluster as cofactor.

The catalysed reaction is 5-amino-6-(D-ribitylamino)uracil + L-tyrosine + S-adenosyl-L-methionine = 5-amino-5-(4-hydroxybenzyl)-6-(D-ribitylimino)-5,6-dihydrouracil + 2-iminoacetate + 5'-deoxyadenosine + L-methionine + H(+). The protein operates within cofactor biosynthesis; coenzyme F0 biosynthesis. Catalyzes the radical-mediated synthesis of 5-amino-5-(4-hydroxybenzyl)-6-(D-ribitylimino)-5,6-dihydrouracil from 5-amino-6-(D-ribitylamino)uracil and L-tyrosine. The polypeptide is 5-amino-6-(D-ribitylamino)uracil--L-tyrosine 4-hydroxyphenyl transferase (Methanococcoides burtonii (strain DSM 6242 / NBRC 107633 / OCM 468 / ACE-M)).